The following is a 131-amino-acid chain: Large ribosomal subunit protein bL17 (131 aa).

The protein belongs to the bacterial ribosomal protein bL17 family. Part of the 50S ribosomal subunit. Contacts protein L32.

In Hamiltonella defensa subsp. Acyrthosiphon pisum (strain 5AT), this protein is Large ribosomal subunit protein bL17.